Here is a 132-residue protein sequence, read N- to C-terminus: Large ribosomal subunit protein bL12 (132 aa).

Residues Glu100–Gly126 show a composition bias toward basic and acidic residues. The interval Glu100 to Lys132 is disordered.

This sequence belongs to the bacterial ribosomal protein bL12 family. Homodimer. Part of the ribosomal stalk of the 50S ribosomal subunit. Forms a multimeric L10(L12)X complex, where L10 forms an elongated spine to which 2 to 4 L12 dimers bind in a sequential fashion. Binds GTP-bound translation factors.

Its function is as follows. Forms part of the ribosomal stalk which helps the ribosome interact with GTP-bound translation factors. Is thus essential for accurate translation. The polypeptide is Large ribosomal subunit protein bL12 (Thermosynechococcus vestitus (strain NIES-2133 / IAM M-273 / BP-1)).